Reading from the N-terminus, the 304-residue chain is Porphobilinogen deaminase (304 aa).

S-(dipyrrolylmethanemethyl)cysteine is present on cysteine 240.

This sequence belongs to the HMBS family. As to quaternary structure, monomer. Dipyrromethane is required as a cofactor.

The catalysed reaction is 4 porphobilinogen + H2O = hydroxymethylbilane + 4 NH4(+). It functions in the pathway porphyrin-containing compound metabolism; protoporphyrin-IX biosynthesis; coproporphyrinogen-III from 5-aminolevulinate: step 2/4. Functionally, tetrapolymerization of the monopyrrole PBG into the hydroxymethylbilane pre-uroporphyrinogen in several discrete steps. The polypeptide is Porphobilinogen deaminase (Xanthomonas campestris pv. campestris (strain ATCC 33913 / DSM 3586 / NCPPB 528 / LMG 568 / P 25)).